A 336-amino-acid polypeptide reads, in one-letter code: Holliday junction branch migration complex subunit RuvB (336 aa).

Residues 1-182 (MKERIVNLET…FGMSFRMQFY (182 aa)) form a large ATPase domain (RuvB-L) region. Residues Leu21, Arg22, Gly63, Lys66, Thr67, Ser68, 129 to 131 (EDF), Arg172, Tyr182, and Arg219 each bind ATP. Thr67 serves as a coordination point for Mg(2+). Positions 183-253 (SPSELSLIIK…ITLHALNELG (71 aa)) are small ATPAse domain (RuvB-S). A head domain (RuvB-H) region spans residues 256-336 (ELGFDEADLA…IPTLNPQTLF (81 aa)). Arg310 and Arg315 together coordinate DNA.

The protein belongs to the RuvB family. In terms of assembly, homohexamer. Forms an RuvA(8)-RuvB(12)-Holliday junction (HJ) complex. HJ DNA is sandwiched between 2 RuvA tetramers; dsDNA enters through RuvA and exits via RuvB. An RuvB hexamer assembles on each DNA strand where it exits the tetramer. Each RuvB hexamer is contacted by two RuvA subunits (via domain III) on 2 adjacent RuvB subunits; this complex drives branch migration. In the full resolvosome a probable DNA-RuvA(4)-RuvB(12)-RuvC(2) complex forms which resolves the HJ.

Its subcellular location is the cytoplasm. The enzyme catalyses ATP + H2O = ADP + phosphate + H(+). The RuvA-RuvB-RuvC complex processes Holliday junction (HJ) DNA during genetic recombination and DNA repair, while the RuvA-RuvB complex plays an important role in the rescue of blocked DNA replication forks via replication fork reversal (RFR). RuvA specifically binds to HJ cruciform DNA, conferring on it an open structure. The RuvB hexamer acts as an ATP-dependent pump, pulling dsDNA into and through the RuvAB complex. RuvB forms 2 homohexamers on either side of HJ DNA bound by 1 or 2 RuvA tetramers; 4 subunits per hexamer contact DNA at a time. Coordinated motions by a converter formed by DNA-disengaged RuvB subunits stimulates ATP hydrolysis and nucleotide exchange. Immobilization of the converter enables RuvB to convert the ATP-contained energy into a lever motion, pulling 2 nucleotides of DNA out of the RuvA tetramer per ATP hydrolyzed, thus driving DNA branch migration. The RuvB motors rotate together with the DNA substrate, which together with the progressing nucleotide cycle form the mechanistic basis for DNA recombination by continuous HJ branch migration. Branch migration allows RuvC to scan DNA until it finds its consensus sequence, where it cleaves and resolves cruciform DNA. The sequence is that of Holliday junction branch migration complex subunit RuvB from Helicobacter pylori (strain P12).